Reading from the N-terminus, the 423-residue chain is UDP-N-acetylglucosamine 1-carboxyvinyltransferase 2 (423 aa).

23–24 (KN) provides a ligand contact to phosphoenolpyruvate. Residue Arg93 coordinates UDP-N-acetyl-alpha-D-glucosamine. Cys117 acts as the Proton donor in catalysis. At Cys117 the chain carries 2-(S-cysteinyl)pyruvic acid O-phosphothioketal. Residues 122-126 (RPIDQ), Asp305, and Ile327 each bind UDP-N-acetyl-alpha-D-glucosamine.

The protein belongs to the EPSP synthase family. MurA subfamily.

The protein localises to the cytoplasm. The enzyme catalyses phosphoenolpyruvate + UDP-N-acetyl-alpha-D-glucosamine = UDP-N-acetyl-3-O-(1-carboxyvinyl)-alpha-D-glucosamine + phosphate. It functions in the pathway cell wall biogenesis; peptidoglycan biosynthesis. Cell wall formation. Adds enolpyruvyl to UDP-N-acetylglucosamine. This chain is UDP-N-acetylglucosamine 1-carboxyvinyltransferase 2, found in Listeria monocytogenes serotype 4b (strain F2365).